Reading from the N-terminus, the 175-residue chain is Alpha-crystallin B chain (175 aa).

Met1 is subject to N-acetylmethionine. Ser19 is subject to Phosphoserine. Residue Ser41 is glycosylated (O-linked (GlcNAc) serine). 2 positions are modified to phosphoserine: Ser45 and Ser59. The region spanning 56–164 is the sHSP domain; sequence RAPSWIDTGL…PERTIPITRE (109 aa). His83 serves as a coordination point for Zn(2+). Lys92 carries the N6-acetyllysine modification. Residues His104, Glu106, His111, and His119 each contribute to the Zn(2+) site. The tract at residues 142–175 is disordered; sequence VLTVNGPRRQASGPERTIPITREEKPAVTAAPKK. The residue at position 166 (Lys166) is an N6-acetyllysine. Thr170 is a glycosylation site (O-linked (GlcNAc) threonine).

It belongs to the small heat shock protein (HSP20) family. In terms of assembly, heteromer composed of three CRYAA and one CRYAB subunits. Aggregates with homologous proteins, including the small heat shock protein HSPB1, to form large heteromeric complexes. Inter-subunit bridging via zinc ions enhances stability, which is crucial as there is no protein turn over in the lens. Interacts with HSPBAP1 and TTN/titin. Interacts with TMEM109; in the cellular response to DNA damage. Interacts with DES; binds rapidly during early stages of DES filament assembly and a reduced binding seen in the later stages. Interacts with TMED10; the interaction mediates the translocation from the cytoplasm into the ERGIC (endoplasmic reticulum-Golgi intermediate compartment) and thereby secretion. Interacts with ATP6V1A and with MTOR, forming a ternary complex.

The protein localises to the cytoplasm. Its subcellular location is the nucleus. It localises to the secreted. It is found in the lysosome. May contribute to the transparency and refractive index of the lens. Has chaperone-like activity, preventing aggregation of various proteins under a wide range of stress conditions. In lens epithelial cells, stabilizes the ATP6V1A protein, preventing its degradation by the proteasome. The chain is Alpha-crystallin B chain (CRYAB) from Sus scrofa (Pig).